The sequence spans 518 residues: U-box domain-containing protein 57 (518 aa).

The stretch at 86-142 (EEVRKVHILEEEIVTLKHQADTYLVQKEKAVTAYDQLKHERDNAVQQVNELRDQSTH) forms a coiled coil. One can recognise a Protein kinase domain in the interval 159-409 (FKNAREVGDT…RPDLLNEVWI (251 aa)). The U-box domain maps to 434 to 508 (SVPAAFICPI…HGYLQQQQPN (75 aa)).

It carries out the reaction S-ubiquitinyl-[E2 ubiquitin-conjugating enzyme]-L-cysteine + [acceptor protein]-L-lysine = [E2 ubiquitin-conjugating enzyme]-L-cysteine + N(6)-ubiquitinyl-[acceptor protein]-L-lysine.. It functions in the pathway protein modification; protein ubiquitination. Its function is as follows. Possesses E3 ubiquitin-protein ligase in vitro. May be involved in cell death signaling. This Oryza sativa subsp. japonica (Rice) protein is U-box domain-containing protein 57 (PUB57).